The sequence spans 917 residues: Ion channel POLLUX (917 aa).

The interval 1-154 is disordered; sequence MIPLPVAAAN…SSSPVARPQH (154 aa). Residues 7–19 show a composition bias toward low complexity; that stretch reads AAANSNSNSNSNS. Over residues 78–89 the composition is skewed to polar residues; the sequence is HQWNYPSFLGTT. Residues 119 to 136 show a composition bias toward low complexity; it reads KTNTNTNTNTNTNTNTNT. Transmembrane regions (helical) follow at residues 160 to 180, 230 to 250, 290 to 310, and 342 to 362; these read PPIF…SSYL, LYIV…LDYL, LALL…LYAV, and VVSV…LGLV. 2 consecutive RCK N-terminal domains span residues 383-524 and 643-792; these read RNHI…ETVV and PEKI…DKSI. Residues 413–435 are a coiled coil; that stretch reads VIVVLAEKEKEEMEMDITKLEFD.

This sequence belongs to the castor/pollux (TC 1.A.1.23) family. As to quaternary structure, homooligomer. As to expression, mainly expressed in nodules. Also detected in infected and uninfected roots, leaves, seed pods, and flower buds.

It localises to the nucleus membrane. Ion channel with permeability for potassium. Involved in perinuclear calcium spiking but not in cytosolic calcium influx. Required for early signal transduction events leading to endosymbiosis. Acts early in a signal transduction chain leading from the perception of Nod factor to the activation of calcium spiking. Also involved in fungal entry into root epidermal cells during the establishment of the arbuscular mycorrhizal symbiosis. The sequence is that of Ion channel POLLUX (POLLUX) from Lotus japonicus (Lotus corniculatus var. japonicus).